The chain runs to 161 residues: Nucleotide-binding protein Plav_2177 (161 aa).

Belongs to the YajQ family.

In terms of biological role, nucleotide-binding protein. This chain is Nucleotide-binding protein Plav_2177, found in Parvibaculum lavamentivorans (strain DS-1 / DSM 13023 / NCIMB 13966).